The chain runs to 150 residues: Large ribosomal subunit protein uL13 (150 aa).

Belongs to the universal ribosomal protein uL13 family. In terms of assembly, part of the 50S ribosomal subunit.

This protein is one of the early assembly proteins of the 50S ribosomal subunit, although it is not seen to bind rRNA by itself. It is important during the early stages of 50S assembly. In Chlorobium phaeobacteroides (strain BS1), this protein is Large ribosomal subunit protein uL13.